We begin with the raw amino-acid sequence, 170 residues long: Adenine phosphoribosyltransferase (170 aa).

It belongs to the purine/pyrimidine phosphoribosyltransferase family. As to quaternary structure, homodimer.

The protein localises to the cytoplasm. The enzyme catalyses AMP + diphosphate = 5-phospho-alpha-D-ribose 1-diphosphate + adenine. It functions in the pathway purine metabolism; AMP biosynthesis via salvage pathway; AMP from adenine: step 1/1. Its function is as follows. Catalyzes a salvage reaction resulting in the formation of AMP, that is energically less costly than de novo synthesis. This Prochlorococcus marinus (strain AS9601) protein is Adenine phosphoribosyltransferase.